Consider the following 325-residue polypeptide: Transaldolase (325 aa).

Residue Lys125 is the Schiff-base intermediate with substrate of the active site.

It belongs to the transaldolase family. Type 2 subfamily.

It localises to the cytoplasm. It carries out the reaction D-sedoheptulose 7-phosphate + D-glyceraldehyde 3-phosphate = D-erythrose 4-phosphate + beta-D-fructose 6-phosphate. It functions in the pathway carbohydrate degradation; pentose phosphate pathway; D-glyceraldehyde 3-phosphate and beta-D-fructose 6-phosphate from D-ribose 5-phosphate and D-xylulose 5-phosphate (non-oxidative stage): step 2/3. Functionally, transaldolase is important for the balance of metabolites in the pentose-phosphate pathway. This Campylobacter jejuni subsp. jejuni serotype O:6 (strain 81116 / NCTC 11828) protein is Transaldolase.